The following is a 103-amino-acid chain: Cell division protein FtsB (103 aa).

Residues 1–3 lie on the Cytoplasmic side of the membrane; it reads MGK. A helical transmembrane segment spans residues 4–21; the sequence is LTLLLLAILVWLQYSLWF. Topologically, residues 22–103 are periplasmic; it reads GKNGIHDYSR…RAQTAGQNNR (82 aa). A coiled-coil region spans residues 31–71; it reads RVNDDVAAQQATNAKLKARNDQLFAEIDDLNGGQEALEERA.

Belongs to the FtsB family. In terms of assembly, part of a complex composed of FtsB, FtsL and FtsQ.

The protein resides in the cell inner membrane. Functionally, essential cell division protein. May link together the upstream cell division proteins, which are predominantly cytoplasmic, with the downstream cell division proteins, which are predominantly periplasmic. This Escherichia fergusonii (strain ATCC 35469 / DSM 13698 / CCUG 18766 / IAM 14443 / JCM 21226 / LMG 7866 / NBRC 102419 / NCTC 12128 / CDC 0568-73) protein is Cell division protein FtsB.